A 307-amino-acid polypeptide reads, in one-letter code: PCP degradation transcriptional activation protein (307 aa).

The region spanning 6-63 is the HTH lysR-type domain; the sequence is LPLGHLMVFDALYRHGSAGKAAHALSMPQPTLSRWLAQLRTHFDDPLFVRTRSGMEPT. Residues 23–42 constitute a DNA-binding region (H-T-H motif); it reads AGKAAHALSMPQPTLSRWLA.

Belongs to the LysR transcriptional regulatory family.

Functionally, transcriptional activator for the pcpA, pcpB and pcpE genes for pentachlorophenol (PCP) degradation. Essential for PCP degradation. This is PCP degradation transcriptional activation protein (pcpR) from Sphingobium chlorophenolicum.